The sequence spans 262 residues: Caffeyl-CoA reductase-Etf complex subunit CarD (262 aa).

It belongs to the ETF beta-subunit/FixA family. Part of the homotrimeric caffeyl-CoA reductase-Etf complex composed of (R)-2-hydroxyisocaproyl-CoA dehydratase CarC, and the electron transfer flavoprotein (ETF) alpha (CarE) and beta (CarD) subunits. Requires FAD as cofactor. It depends on AMP as a cofactor.

The protein resides in the cytoplasm. The enzyme catalyses hydrocaffeoyl-CoA + 2 reduced [2Fe-2S]-[ferredoxin] + 2 NAD(+) = (E)-caffeoyl-CoA + 2 oxidized [2Fe-2S]-[ferredoxin] + 2 NADH. Its function is as follows. Caffeyl-CoA reductase-Etf complex catalyzes the reduction of caffeyl-CoA to yield hydrocaffeyl-CoA. It couples the endergonic ferredoxin reduction with NADH as reductant to the exergonic reduction of caffeoyl-CoA with the same reductant. It uses the mechanism of electron bifurcation to overcome the steep energy barrier in ferredoxin reduction. The electron transfer flavoprotein (Etf) mediates the electron transfer between the different donors and acceptors. The complex can also reduce 4-coumaroyl-CoA and feruloyl-CoA. This Acetobacterium woodii (strain ATCC 29683 / DSM 1030 / JCM 2381 / KCTC 1655 / WB1) protein is Caffeyl-CoA reductase-Etf complex subunit CarD.